Consider the following 418-residue polypeptide: E3 ubiquitin-protein ligase pellino homolog 1 (418 aa).

Positions 13 to 200 (APVKYGELIV…MHPRNGFTED (188 aa)) constitute an FHA; atypical domain. Serine 121 carries the post-translational modification Phosphoserine; by ATM. Threonine 127 is subject to Phosphothreonine; by ATM. Residues 311-399 (CGHVHGYHNW…TFHAACPFCA (89 aa)) are ring-like domain; necessary for ubiqitination of RIPK3.

This sequence belongs to the pellino family. As to quaternary structure, interacts with MAP3K7. Upon IL1B treatment, forms a complex with TRAF6, IRAK1, IRAK4 and MYD88; this complex recruits MAP3K7/TAK1, TAB1 and TAB2 to mediate NF-kappa-B activation. Direct binding of SMAD6 to PELI1 prevents the complex formation and hence negatively regulates IL1R-TLR signaling and eventually NF-kappa-B-mediated gene expression. Interacts (via atypical FHA domain) with RIPK3; preferentially binds to the 'Thr-182' phosphorylated form of RIPK3. Interacts with RIPK1 and IRAK1. In terms of processing, phosphorylation by IRAK1 and IRAK4 enhances its E3 ligase activity. Phosphorylated by ATM in response to DNA damage, promoting localization to DNA double-strand breaks (DSBs) and ability to mediate 'Lys-63'-linked ubiquitination of NBN. Post-translationally, sumoylated. As to expression, expressed at high levels in normal skin but decreased in keratinocytes from toxic epidermal necrolysis (TEN) patients (at protein level).

It is found in the chromosome. The enzyme catalyses S-ubiquitinyl-[E2 ubiquitin-conjugating enzyme]-L-cysteine + [acceptor protein]-L-lysine = [E2 ubiquitin-conjugating enzyme]-L-cysteine + N(6)-ubiquitinyl-[acceptor protein]-L-lysine.. Its pathway is protein modification; protein ubiquitination. In terms of biological role, E3 ubiquitin ligase catalyzing the covalent attachment of ubiquitin moieties onto substrate proteins. Involved in the TLR and IL-1 signaling pathways via interaction with the complex containing IRAK kinases and TRAF6. Acts as a positive regulator of inflammatory response in microglia through activation of NF-kappa-B and MAP kinase. Mediates 'Lys-63'-linked polyubiquitination of IRAK1 allowing subsequent NF-kappa-B activation. Conjugates 'Lys-63'-linked ubiquitin chains to the adapter protein ASC/PYCARD, which in turn is crucial for NLRP3 inflammasome activation. Mediates 'Lys-48'-linked polyubiquitination of RIPK3 leading to its subsequent proteasome-dependent degradation; preferentially recognizes and mediates the degradation of the 'Thr-182' phosphorylated form of RIPK3. Negatively regulates necroptosis by reducing RIPK3 expression. Mediates 'Lys-63'-linked ubiquitination of RIPK1. Following phosphorylation by ATM, catalyzes 'Lys-63'-linked ubiquitination of NBN, promoting DNA repair via homologous recombination. Negatively regulates activation of the metabolic mTORC1 signaling pathway by mediating 'Lys-63'-linked ubiquitination of mTORC1-inhibitory protein TSC1 and thereby promoting TSC1/TSC2 complex stability. The chain is E3 ubiquitin-protein ligase pellino homolog 1 from Homo sapiens (Human).